We begin with the raw amino-acid sequence, 366 residues long: Alanine racemase (366 aa).

The active-site Proton acceptor; specific for D-alanine is Lys33. At Lys33 the chain carries N6-(pyridoxal phosphate)lysine. Arg129 lines the substrate pocket. Tyr253 (proton acceptor; specific for L-alanine) is an active-site residue. Met301 lines the substrate pocket.

Belongs to the alanine racemase family. Requires pyridoxal 5'-phosphate as cofactor.

The catalysed reaction is L-alanine = D-alanine. The protein operates within amino-acid biosynthesis; D-alanine biosynthesis; D-alanine from L-alanine: step 1/1. Functionally, catalyzes the interconversion of L-alanine and D-alanine. May also act on other amino acids. This chain is Alanine racemase (alr), found in Xanthomonas oryzae pv. oryzae (strain MAFF 311018).